We begin with the raw amino-acid sequence, 187 residues long: Large ribosomal subunit protein eL18y (187 aa).

The disordered stretch occupies residues 151–187 (FGPAPGVPHSHSKPYVRAKGRKFEKARGKRKSRGFKV). Composition is skewed to basic residues over residues 160–170 (SHSKPYVRAKG) and 177–187 (RGKRKSRGFKV).

Belongs to the eukaryotic ribosomal protein eL18 family. As to quaternary structure, interacts with NIK1. Interacts directly with EXA1. As to expression, ubiquitous.

The protein resides in the cytoplasm. The polypeptide is Large ribosomal subunit protein eL18y (RPL18B) (Arabidopsis thaliana (Mouse-ear cress)).